Here is a 217-residue protein sequence, read N- to C-terminus: MASTELASDVYALPCGDDGTTALSTPVVVSVLASLLERHIARNERDQAAAADGEAARRARAFDSGTVLDMSLHAFLERFSRYANVSPQVYVVAYAYLDRLRRGDGVRVVSANAQRLLTTAILVASKFVEDRNYKNSYFAAVGGLTAAELSSLELDFLFLMQFRLNVSVSVFQSYCRHLEREVSYGGGYQVERCLKKALVCSGEAQAQQRQAASAAAQ.

Belongs to the cyclin family. Cyclin U/P subfamily.

In Oryza sativa subsp. japonica (Rice), this protein is Cyclin-P2-1 (CYCP2-1).